Reading from the N-terminus, the 919-residue chain is MAADVFMCSPRRPRSRGRQVLLKPQVSEDDDDSDTDEPSPPPASGAATPARAHASAAPPPPRAGPGREEPPRRQQIIHSGHFMVSSPHREHPPKKGYDFDTVNKQTCQTYSFGKTSSCHLSIDASLTKLFECMTLAYSGKLVSPKWKNFKGLKLQWRDKIRLNNAIWRAWYMQYLEKRKNPVCHFVTPLDGSVDVDEHRRPEAITTEGKYWKSRIEIVIREYHKWRTYFKKRLQQHKDEDLSSLVQDDDMLYWHKHGDGWKTPVPMEEDPLLDTDMLMSEFSDTLFSTLSSHQPVAWPNPREIAHLGNADMIQPGLIPLQPNLDFMDTFEPFQDLFSSSRSIFGSMLPASASAPVPDPNNPPAQESILPTTALPTVSLPDSLIAPPTAPSLAHMDEQGCEHTSRTEDPFIQPTDFGPSEPPLSVPQPFLPVFTMPLLSPSPAPPPISPVLPLVPPPATALNPPAPPTFHQPQKFAGVNKAPSVITHTASATLTHDAPATTFSQSQGLVITTHHPAPSAAPCGLALSPVTRPPQPRLTFVHPKPVSLTGGRPKQPHKIVPAPKPEPVSLVLKNARIAPAAFSGQPQAVIMTSGPLKREGMLASTVSQSNVVIAPAAIARAPGVPEFHSSILVTDLGHGTSSPPAPVSRLFPSTAQDPLGKGEQVPLHGGSPQVTVTGPSRDCPNSGQASPCASEQSPSPQSPQNNCSGKSDPKNVAALKNRQMKHISAEQKRRFNIKMCFDMLNSLISNNSKLTSHAITLQKTVEYITKLQQERGQMQEEARRLREEIEELNATIISCQQLLPATGVPVTRRQFDHMKDMFDEYVKTRTLQNWKFWIFSIIIKPLFESFKGMVSTSSLEELHRTALSWLDQHCSLPILRPMVLSTLRQLSTSTSILTDPAQLPEQASKAVTRIGKRLGES.

Residues 1 to 72 (MAADVFMCSP…AGPGREEPPR (72 aa)) form a disordered region. At A2 the chain carries N-acetylalanine. 4 positions are modified to phosphoserine: S9, S27, S33, and S39. Over residues 27–37 (SEDDDDSDTDE) the composition is skewed to acidic residues. A compositionally biased stretch (low complexity) spans 44 to 56 (SGAATPARAHASA). Positions 73–327 (RQQIIHSGHF…PLQPNLDFMD (255 aa)) are required for cytoplasmic localization. A transactivation domain region spans residues 322 to 445 (NLDFMDTFEP…LLSPSPAPPP (124 aa)). Disordered stretches follow at residues 542 to 562 (KPVS…PAPK) and 633 to 712 (DLGH…SDPK). S669 is modified (phosphoserine). Positions 670–685 (PQVTVTGPSRDCPNSG) are enriched in polar residues. The span at 686–706 (QASPCASEQSPSPQSPQNNCS) shows a compositional bias: low complexity. Residues 719–769 (NRQMKHISAEQKRRFNIKMCFDMLNSLISNNSKLTSHAITLQKTVEYITKL) form the bHLH domain. The tract at residues 769–790 (LQQERGQMQEEARRLREEIEEL) is leucine-zipper. Residues 832–881 (WKFWIFSIIIKPLFESFKGMVSTSSLEELHRTALSWLDQHCSLPILRPMV) are mediates heterotypic interactions between MLXIP and MLX and is required for cytoplasmic localization.

Efficient DNA binding requires dimerization with another bHLH protein. Binds DNA as a homodimer or a heterodimer with MLX. In terms of tissue distribution, widely expressed in adult tissues. Most abundant in skeletal muscle.

It is found in the cytoplasm. Its subcellular location is the nucleus. The protein localises to the mitochondrion outer membrane. Binds DNA as a heterodimer with MLX and activates transcription. Binds to the canonical E box sequence 5'-CACGTG-3'. Plays a role in transcriptional activation of glycolytic target genes. Involved in glucose-responsive gene regulation. The sequence is that of MLX-interacting protein from Homo sapiens (Human).